Reading from the N-terminus, the 192-residue chain is Ribose 1,5-bisphosphate phosphokinase PhnN (192 aa).

Residue 15-22 (GPSGAGKD) participates in ATP binding.

This sequence belongs to the ribose 1,5-bisphosphokinase family.

It catalyses the reaction alpha-D-ribose 1,5-bisphosphate + ATP = 5-phospho-alpha-D-ribose 1-diphosphate + ADP. The protein operates within metabolic intermediate biosynthesis; 5-phospho-alpha-D-ribose 1-diphosphate biosynthesis; 5-phospho-alpha-D-ribose 1-diphosphate from D-ribose 5-phosphate (route II): step 3/3. Functionally, catalyzes the phosphorylation of ribose 1,5-bisphosphate to 5-phospho-D-ribosyl alpha-1-diphosphate (PRPP). The sequence is that of Ribose 1,5-bisphosphate phosphokinase PhnN from Brucella melitensis biotype 2 (strain ATCC 23457).